Here is a 216-residue protein sequence, read N- to C-terminus: Peptide methionine sulfoxide reductase MsrA (216 aa).

The active site involves C58.

It belongs to the MsrA Met sulfoxide reductase family.

The enzyme catalyses L-methionyl-[protein] + [thioredoxin]-disulfide + H2O = L-methionyl-(S)-S-oxide-[protein] + [thioredoxin]-dithiol. It carries out the reaction [thioredoxin]-disulfide + L-methionine + H2O = L-methionine (S)-S-oxide + [thioredoxin]-dithiol. Its function is as follows. Has an important function as a repair enzyme for proteins that have been inactivated by oxidation. Catalyzes the reversible oxidation-reduction of methionine sulfoxide in proteins to methionine. This is Peptide methionine sulfoxide reductase MsrA from Azotobacter vinelandii (strain DJ / ATCC BAA-1303).